The sequence spans 76 residues: Acyl carrier protein (76 aa).

A Carrier domain is found at 1–74 (MEERIKEIIA…DVINYIKEKK (74 aa)). At serine 34 the chain carries O-(pantetheine 4'-phosphoryl)serine.

It belongs to the acyl carrier protein (ACP) family. 4'-phosphopantetheine is transferred from CoA to a specific serine of apo-ACP by AcpS. This modification is essential for activity because fatty acids are bound in thioester linkage to the sulfhydryl of the prosthetic group.

The protein localises to the cytoplasm. It participates in lipid metabolism; fatty acid biosynthesis. Its function is as follows. Carrier of the growing fatty acid chain in fatty acid biosynthesis. This Persephonella marina (strain DSM 14350 / EX-H1) protein is Acyl carrier protein.